A 599-amino-acid chain; its full sequence is MGQRVDLWSEVIKSEEEDGDIPKIEAVFQRRKKPDKSSEAVNFGWLVKGARTSSVNGPKRDSWARSLSTRGRESIAVRAYVNNQPQKKAAGRKKPPIPKGKVVKAPDFQKEKEYFRDIDAFELLEESPSPNKSSTWTMGEQVVPEMPHLSTRLEKWLISKKLNHTCGPSSTLSKILENSAIHQESVCDNDAFDSLSLKTPDKSSAGNTSVFRLIPSCDENLAAEDVPVRKIKMESIDLEDELKRLSLTSDLIPTHQDFDQPILDLLSACGQMRPSNFIEAFSKFCEPESIVKIGEGTYGEAFRAGSSVCKIVPIDGDFRVNGEVQKRADELLEEVILSWTLNQLRECETTAQNLCPTYIKTQDIKLCQGPYDPILIKAWEEWDAKHGSENDHPDFPEKQCYVMFVLEHGGKDLESFVLLNFDEARSLLVQATAGLAVAEAAFEFEHRDLHWGNILLSRNNSDTLPFILEGKQVCIKTFGVQISIIDFTLSRINTGEKILFLDLTSDPYLFKGPKGDKQSETYRKMKAVTEDYWEGSFARTNVLWLIYLVDILLTKKSFERSSKHERELRSLKKRMEKYESAKEAVSDPFFSDMLMDQIS.

One can recognise a Protein kinase domain in the interval Pro-287–Ser-599. ATP-binding positions include Ile-293–Ala-301, Lys-310, Glu-407–Asp-412, Asp-448–Asn-453, and Asp-486–Thr-488. Asp-448 (proton acceptor) is an active-site residue.

Belongs to the protein kinase superfamily. Ser/Thr protein kinase family. Haspin subfamily. In terms of tissue distribution, expressed in meristems and primordia of root tips, lateral roots, shoot apex, leaves and flowers.

The protein resides in the cytoplasm. It is found in the perinuclear region. It localises to the nucleus. The protein localises to the chromosome. Its subcellular location is the cytoskeleton. The protein resides in the phragmoplast. It catalyses the reaction L-seryl-[protein] + ATP = O-phospho-L-seryl-[protein] + ADP + H(+). The enzyme catalyses L-threonyl-[protein] + ATP = O-phospho-L-threonyl-[protein] + ADP + H(+). Threonine-protein kinase that phosphorylates histone H3 in vitro at 'Thr-3' (H3T3ph) and 'Thr-11' (H3T11ph), but not at 'Ser-10' (H3S10ph) or 'Ser-28' (H3S28ph). Plays a role in mitotic cell division during plant growth. Threonine-protein kinase that phosphorylates histone H3 in vitro at 'Thr-3' (H3T3ph), but not at 'Thr-11' (H3T11ph), 'Ser-10' (H3S10ph) or 'Ser-28' (H3S28ph). Involved in histone H3 phosphorylation in mitotic cells. Contributes to organ and plant development, as well as embryonic patterning. The protein is Serine/threonine-protein kinase haspin homolog of Arabidopsis thaliana (Mouse-ear cress).